We begin with the raw amino-acid sequence, 629 residues long: Polyadenylate-binding protein, cytoplasmic and nuclear (629 aa).

Positions 1–11 are enriched in polar residues; it reads MSAAETNQLQE. A disordered region spans residues 1-48; sequence MSAAETNQLQESMEKLNIGSTTEEQSAAAATTTADQSAEEQGESSGVA. Low complexity predominate over residues 20–36; it reads STTEEQSAAAATTTADQ. RRM domains follow at residues 52 to 130, 140 to 217, 233 to 310, and 336 to 413; these read ASLY…WSQR, GNIF…KHIS, TNIY…RAQK, and VNLF…LAQR. Residues 503–534 form a disordered region; it reads PPQFQQDFNGQNMRPQQQQQQQPRGGYYPNRN. Over residues 505 to 517 the composition is skewed to polar residues; the sequence is QFQQDFNGQNMRP. One can recognise a PABC domain in the interval 537–618; the sequence is SKRDLAAIIS…ALTAFEEYKK (82 aa).

This sequence belongs to the polyadenylate-binding protein type-1 family.

It localises to the cytoplasm. Its subcellular location is the nucleus. Its function is as follows. Binds the poly(A) tail of mRNA. Appears to be an important mediator of the multiple roles of the poly(A) tail in mRNA biogenesis, stability and translation. In the nucleus, involved in both mRNA cleavage and polyadenylation. Is also required for efficient mRNA export to the cytoplasm. Acts in concert with a poly(A)-specific nuclease (PAN) to affect poly(A) tail shortening, which may occur concomitantly with either nucleocytoplasmic mRNA transport or translational initiation. In the cytoplasm, stimulates translation initiation and regulates mRNA decay through translation termination-coupled poly(A) shortening, probably mediated by PAN. The sequence is that of Polyadenylate-binding protein, cytoplasmic and nuclear (PAB1) from Candida albicans (strain SC5314 / ATCC MYA-2876) (Yeast).